The sequence spans 225 residues: Cytidylate kinase (225 aa).

11 to 19 (GPAAAGKST) serves as a coordination point for ATP.

Belongs to the cytidylate kinase family. Type 1 subfamily.

It is found in the cytoplasm. The catalysed reaction is CMP + ATP = CDP + ADP. The enzyme catalyses dCMP + ATP = dCDP + ADP. This chain is Cytidylate kinase, found in Bacillus pumilus (strain SAFR-032).